A 54-amino-acid chain; its full sequence is Ribulose bisphosphate carboxylase large chain (54 aa).

The propeptide occupies 1 to 2 (MS). Pro3 is modified (N-acetylproline). Lys14 bears the N6,N6,N6-trimethyllysine mark.

This sequence belongs to the RuBisCO large chain family. Type I subfamily. Heterohexadecamer of 8 large chains and 8 small chains.

The protein resides in the plastid. It localises to the chloroplast. It catalyses the reaction 2 (2R)-3-phosphoglycerate + 2 H(+) = D-ribulose 1,5-bisphosphate + CO2 + H2O. The catalysed reaction is D-ribulose 1,5-bisphosphate + O2 = 2-phosphoglycolate + (2R)-3-phosphoglycerate + 2 H(+). RuBisCO catalyzes two reactions: the carboxylation of D-ribulose 1,5-bisphosphate, the primary event in carbon dioxide fixation, as well as the oxidative fragmentation of the pentose substrate in the photorespiration process. Both reactions occur simultaneously and in competition at the same active site. The chain is Ribulose bisphosphate carboxylase large chain (rbcL) from Rhamnus cathartica (Common buckthorn).